Reading from the N-terminus, the 483-residue chain is Triplex capsid protein 1 (483 aa).

Residues 24–40 (LLGNNRFIQIGNGLHMT) carry the RIP homotypic interaction motif (RHIM) motif.

This sequence belongs to the herpesviridae TRX1 protein family. In terms of assembly, interacts with TRX2, MCP and capsid vertex component 2/CVC2. Self-assembles into homo-oligomeric amyloid fibrils. Interacts with host ZBP1; this interaction prevents host necroptosis and extrinsic apoptosis. Interacts with host RIPK3.

Its subcellular location is the virion. The protein resides in the host nucleus. In terms of biological role, structural component of the T=16 icosahedral capsid. The capsid is composed of pentamers and hexamers of major capsid protein/MCP, which are linked together by heterotrimers called triplexes. These triplexes are formed by a single molecule of triplex protein 1/TRX1 and two copies of triplex protein 2/TRX2. Additionally, TRX1 is required for efficient transport of TRX2 to the nucleus, which is the site of capsid assembly. Also prevents necroptosis and extrinsic apoptosis by sequestering host ZBP1 into large, insoluble supercomplexes and impairing its ability to interact with RIPK3. This chain is Triplex capsid protein 1, found in Varicella-zoster virus (strain Dumas) (HHV-3).